The following is an 838-amino-acid chain: MDGDGLGRLIGSEIHGFHTLQDLDVQTMLEEAKSRWLRPNEIHAILCGRIILFDRKMLRNFRKDGHNWKKKKDGRTVKEAHEHLKVGNEERIHVYYAHGEDNTTFVRRCYWLLDKARENIVLVHYRDTQEAATTSGDSISSPISVSEQTFPNRVAAEDIDTVVRNHDISLHDINTLDWDELLVPTDLNNQSAPTVDNLSYFTEPLQNAANGTAEHGNATVADGSLDALLNDGPQSRESFGRWMNSFISESNGSLEDPSFEPMVMPRQDPLAPQAVFHSHSNIPEQVFNITDVSPAWAYSSEKTKILVTGFLHDSYQHLERSNLYCVCGDFCVPAEYLQAGVYRCIIPPHSPGMVNLYLSADGHKPISQCFRFEHRAVPVLDKTVPEDNQDSKWEEFEFQVRLSHLLFTSSNKLNVLSSKISPHNLRDAKKLASKTNHLLNSWAYLVKSIQGNKVSFDQAKDHLFELSLKNRLKEWLMEKVLEGRNTLDYDSKGLGVIHLCASLGYTWSVQLFSLSGLSLNFRDKQGWTALHWAAYYGREKMVAALLSAGARPNLVTDSTKDNLGGCMAADLAQQNGYDGLAAYLAEKCLVAQFRDMKIAGNITGDLEACKAEMLNQGTLPEDEQSLKDALAAYRTAAEAAARIQGAFREKALKAARSSVIQFANKEEEAKSIIAAMKIQNAFRKYDTRRKIEAAYRIQCRFQTWKIRREYLNMRRQAIRIQAAFRGLQARRQYKKILWSVGVLEKAVLRWRQKRKGFRGLQVAAEEDSPGEAQEDFYKTSQRQAEERLERSVVRVQAMFRSKKAQQDYRRMKLTHEEAQVNHLTFLNLSFGKKNSNRR.

Positions 25 to 134 (VQTMLEEAKS…YRDTQEAATT (110 aa)) form a DNA-binding region, CG-1. One copy of the ANK repeat lies at 525-554 (QGWTALHWAAYYGREKMVAALLSAGARPNL). 3 IQ domains span residues 671–700 (SIIA…IQCR), 713–742 (MRRQ…SVGV), and 788–817 (LERS…THEE). Residues 738 to 760 (WSVGVLEKAVLRWRQKRKGFRGL) form a calmodulin-binding region. Residues 802–822 (KKAQQDYRRMKLTHEEAQVNH) are a coiled coil.

Belongs to the CAMTA family. As to expression, expressed in roots, stems, leaves, sepals, petals, stamen filaments, top of carpels, anthers and siliques, but not in stigmas.

Its subcellular location is the nucleus. Its function is as follows. Transcription activator that binds calmodulin in a calcium-dependent manner in vitro. Binds to the DNA consensus sequence 5'-[ACG]CGCG[GTC]-3'. Regulates transcriptional activity in response to calcium signals. The polypeptide is Calmodulin-binding transcription activator 6 (Arabidopsis thaliana (Mouse-ear cress)).